Here is a 135-residue protein sequence, read N- to C-terminus: ATP synthase epsilon chain (135 aa).

A compositionally biased stretch (basic and acidic residues) spans 90 to 103 (DVRRAESAKERAES). The tract at residues 90 to 115 (DVRRAESAKERAESHLNNNDEDTDIN) is disordered.

It belongs to the ATPase epsilon chain family. In terms of assembly, F-type ATPases have 2 components, CF(1) - the catalytic core - and CF(0) - the membrane proton channel. CF(1) has five subunits: alpha(3), beta(3), gamma(1), delta(1), epsilon(1). CF(0) has three main subunits: a, b and c.

It localises to the cell membrane. Functionally, produces ATP from ADP in the presence of a proton gradient across the membrane. This is ATP synthase epsilon chain from Staphylococcus carnosus (strain TM300).